A 164-amino-acid polypeptide reads, in one-letter code: Large ribosomal subunit protein uL11 (164 aa).

It belongs to the universal ribosomal protein uL11 family. Part of the ribosomal stalk of the 50S ribosomal subunit. Interacts with L10 and the large rRNA to form the base of the stalk. L10 forms an elongated spine to which L12 dimers bind in a sequential fashion forming a multimeric L10(L12)X complex.

Forms part of the ribosomal stalk which helps the ribosome interact with GTP-bound translation factors. In Pyrococcus furiosus (strain ATCC 43587 / DSM 3638 / JCM 8422 / Vc1), this protein is Large ribosomal subunit protein uL11.